A 593-amino-acid chain; its full sequence is Thiol:disulfide interchange protein DsbD (593 aa).

Residues 1-21 (MRALLTFFVAGLLVLSSPAMA) form the signal peptide. Disulfide bonds link Cys130–Cys136 and Cys207–Cys328. A run of 8 helical transmembrane segments spans residues 193-215 (LLFL…YPIL), 235-257 (LVYV…SAGL), 269-291 (LIGL…TLQL), 318-340 (GAIS…LLYV), 347-369 (LTGG…LVAV), 384-401 (RVKT…IFLL), 408-425 (MWST…FGWL), and 440-462 (SAVG…NYWF). A Thioredoxin domain is found at 451–593 (FASAQPALNY…FLEHIQRISN (143 aa)). An intrachain disulfide couples Cys508 to Cys511.

The protein belongs to the thioredoxin family. DsbD subfamily.

The protein resides in the cell inner membrane. The catalysed reaction is [protein]-dithiol + NAD(+) = [protein]-disulfide + NADH + H(+). The enzyme catalyses [protein]-dithiol + NADP(+) = [protein]-disulfide + NADPH + H(+). In terms of biological role, required to facilitate the formation of correct disulfide bonds in some periplasmic proteins and for the assembly of the periplasmic c-type cytochromes. Acts by transferring electrons from cytoplasmic thioredoxin to the periplasm. This transfer involves a cascade of disulfide bond formation and reduction steps. The sequence is that of Thiol:disulfide interchange protein DsbD from Vibrio vulnificus (strain CMCP6).